The sequence spans 404 residues: Cysteine desulfurase IscS (404 aa).

Pyridoxal 5'-phosphate contacts are provided by residues 75–76, asparagine 155, glutamine 183, and 203–205; these read AT and SGH. An N6-(pyridoxal phosphate)lysine modification is found at lysine 206. Threonine 243 provides a ligand contact to pyridoxal 5'-phosphate. Cysteine 328 acts as the Cysteine persulfide intermediate in catalysis. Residue cysteine 328 coordinates [2Fe-2S] cluster.

The protein belongs to the class-V pyridoxal-phosphate-dependent aminotransferase family. NifS/IscS subfamily. In terms of assembly, homodimer. Forms a heterotetramer with IscU, interacts with other sulfur acceptors. Pyridoxal 5'-phosphate is required as a cofactor.

Its subcellular location is the cytoplasm. The enzyme catalyses (sulfur carrier)-H + L-cysteine = (sulfur carrier)-SH + L-alanine. It functions in the pathway cofactor biosynthesis; iron-sulfur cluster biosynthesis. Its function is as follows. Master enzyme that delivers sulfur to a number of partners involved in Fe-S cluster assembly, tRNA modification or cofactor biosynthesis. Catalyzes the removal of elemental sulfur atoms from cysteine to produce alanine. Functions as a sulfur delivery protein for Fe-S cluster synthesis onto IscU, an Fe-S scaffold assembly protein, as well as other S acceptor proteins. The protein is Cysteine desulfurase IscS of Pectobacterium atrosepticum (strain SCRI 1043 / ATCC BAA-672) (Erwinia carotovora subsp. atroseptica).